A 75-amino-acid chain; its full sequence is MSSGGLLLLLGLLTLWAELTPVSGQDRPKKPGLCPPRPQKPPCVKECKNDWSCPGQQKCCSYGCIDECRDPIFVN.

Residues 1 to 24 (MSSGGLLLLLGLLTLWAELTPVSG) form the signal peptide. Residues 27 to 72 (RPKKPGLCPPRPQKPPCVKECKNDWSCPGQQKCCSYGCIDECRDPI) enclose the WAP domain. 4 disulfide bridges follow: Cys-34–Cys-60, Cys-43–Cys-64, Cys-47–Cys-59, and Cys-53–Cys-68.

It belongs to the venom waprin family. In terms of tissue distribution, expressed by the venom gland.

The protein localises to the secreted. Functionally, damages membranes of susceptible bacteria. Has no hemolytic activity. Not toxic to mice. Does not inhibit the proteinases elastase and cathepsin G. In Oxyuranus scutellatus scutellatus (Australian taipan), this protein is Scuwaprin-a.